Consider the following 532-residue polypeptide: D-arabinono-1,4-lactone oxidase (532 aa).

The FAD-binding PCMH-type domain maps to 25-199; it reads YSARPRLYFQ…VRATIRVVPA (175 aa). Histidine 62 is subject to Pros-8alpha-FAD histidine.

The protein belongs to the oxygen-dependent FAD-linked oxidoreductase family. FAD is required as a cofactor.

Its subcellular location is the mitochondrion membrane. It catalyses the reaction D-arabinono-1,4-lactone + O2 = dehydro-D-arabinono-1,4-lactone + H2O2 + H(+). Its pathway is cofactor biosynthesis; D-erythroascorbate biosynthesis; dehydro-D-arabinono-1,4-lactone from D-arabinose: step 2/2. The chain is D-arabinono-1,4-lactone oxidase (ALO1) from Eremothecium gossypii (strain ATCC 10895 / CBS 109.51 / FGSC 9923 / NRRL Y-1056) (Yeast).